A 434-amino-acid chain; its full sequence is 3-phosphoshikimate 1-carboxyvinyltransferase (434 aa).

Residues Lys-22, Ser-23, and Arg-27 each contribute to the 3-phosphoshikimate site. Lys-22 contributes to the phosphoenolpyruvate binding site. Positions 94 and 122 each coordinate phosphoenolpyruvate. 3-phosphoshikimate is bound by residues Ser-167, Gln-169, Asp-314, and Lys-341. Gln-169 is a binding site for phosphoenolpyruvate. The active-site Proton acceptor is Asp-314. Arg-345 and Arg-391 together coordinate phosphoenolpyruvate.

This sequence belongs to the EPSP synthase family. Monomer.

It localises to the cytoplasm. The enzyme catalyses 3-phosphoshikimate + phosphoenolpyruvate = 5-O-(1-carboxyvinyl)-3-phosphoshikimate + phosphate. The protein operates within metabolic intermediate biosynthesis; chorismate biosynthesis; chorismate from D-erythrose 4-phosphate and phosphoenolpyruvate: step 6/7. Its function is as follows. Catalyzes the transfer of the enolpyruvyl moiety of phosphoenolpyruvate (PEP) to the 5-hydroxyl of shikimate-3-phosphate (S3P) to produce enolpyruvyl shikimate-3-phosphate and inorganic phosphate. This chain is 3-phosphoshikimate 1-carboxyvinyltransferase, found in Leuconostoc mesenteroides subsp. mesenteroides (strain ATCC 8293 / DSM 20343 / BCRC 11652 / CCM 1803 / JCM 6124 / NCDO 523 / NBRC 100496 / NCIMB 8023 / NCTC 12954 / NRRL B-1118 / 37Y).